Consider the following 258-residue polypeptide: Lipoprotein-releasing system ATP-binding protein LolD (258 aa).

The ABC transporter domain occupies 5–244 (LQCCQLSKSY…PTSSITDPAN (240 aa)). 41–48 (GSSGCGKS) serves as a coordination point for ATP. The tract at residues 222–258 (LRPLSDNSEQALPPTSSITDPANNIKDNEPQANERHV) is disordered. The span at 226–243 (SDNSEQALPPTSSITDPA) shows a compositional bias: polar residues. Positions 247–258 (KDNEPQANERHV) are enriched in basic and acidic residues.

The protein belongs to the ABC transporter superfamily. Lipoprotein translocase (TC 3.A.1.125) family. As to quaternary structure, the complex is composed of two ATP-binding proteins (LolD) and two transmembrane proteins (LolC and LolE).

Its subcellular location is the cell inner membrane. Functionally, part of the ABC transporter complex LolCDE involved in the translocation of mature outer membrane-directed lipoproteins, from the inner membrane to the periplasmic chaperone, LolA. Responsible for the formation of the LolA-lipoprotein complex in an ATP-dependent manner. The sequence is that of Lipoprotein-releasing system ATP-binding protein LolD from Colwellia psychrerythraea (strain 34H / ATCC BAA-681) (Vibrio psychroerythus).